The sequence spans 150 residues: Large ribosomal subunit protein bL9 (150 aa).

This sequence belongs to the bacterial ribosomal protein bL9 family.

Its function is as follows. Binds to the 23S rRNA. This Paraburkholderia phytofirmans (strain DSM 17436 / LMG 22146 / PsJN) (Burkholderia phytofirmans) protein is Large ribosomal subunit protein bL9.